The chain runs to 776 residues: Venom dipeptidyl peptidase 4 (776 aa).

Residues 1-19 form the signal peptide; the sequence is MVPLRSFVLLNGLFFVLLA. 3 N-linked (GlcNAc...) asparagine glycosylation sites follow: Asn-44, Asn-66, and Asn-329. Intrachain disulfides connect Cys-449/Cys-452 and Cys-462/Cys-480. 2 N-linked (GlcNAc...) asparagine glycosylation sites follow: Asn-504 and Asn-577. Residue Ser-638 is the Charge relay system of the active site. A disulfide bridge connects residues Cys-658 and Cys-769. Residue Asn-693 is glycosylated (N-linked (GlcNAc...) asparagine). Residues Asp-717 and His-749 each act as charge relay system in the active site.

Belongs to the peptidase S9B family. DPPIV subfamily. As to expression, expressed by the venom gland.

Its subcellular location is the secreted. The enzyme catalyses Release of an N-terminal dipeptide, Xaa-Yaa-|-Zaa-, from a polypeptide, preferentially when Yaa is Pro, provided Zaa is neither Pro nor hydroxyproline.. In terms of biological role, venom dipeptidyl-peptidase which removes N-terminal dipeptides sequentially from polypeptides having unsubstituted N-termini provided that the penultimate residue is proline. May process venom proteins into their active forms and/or modulate the chemotactic activity of immune cells after the insect sting. The protein is Venom dipeptidyl peptidase 4 of Vespa velutina (Asian yellow-legged hornet).